Reading from the N-terminus, the 675-residue chain is DNA ligase (675 aa).

NAD(+)-binding positions include 34 to 38, 83 to 84, and glutamate 116; these read DAEYD and SL. Lysine 118 acts as the N6-AMP-lysine intermediate in catalysis. Residues arginine 139, glutamate 176, lysine 293, and lysine 317 each coordinate NAD(+). The Zn(2+) site is built by cysteine 411, cysteine 414, cysteine 429, and cysteine 435. One can recognise a BRCT domain in the interval 594–675; it reads AGENPFKGKT…FLAIVNAYKR (82 aa).

Belongs to the NAD-dependent DNA ligase family. LigA subfamily. The cofactor is Mg(2+). Mn(2+) serves as cofactor.

The catalysed reaction is NAD(+) + (deoxyribonucleotide)n-3'-hydroxyl + 5'-phospho-(deoxyribonucleotide)m = (deoxyribonucleotide)n+m + AMP + beta-nicotinamide D-nucleotide.. In terms of biological role, DNA ligase that catalyzes the formation of phosphodiester linkages between 5'-phosphoryl and 3'-hydroxyl groups in double-stranded DNA using NAD as a coenzyme and as the energy source for the reaction. It is essential for DNA replication and repair of damaged DNA. The sequence is that of DNA ligase from Mannheimia succiniciproducens (strain KCTC 0769BP / MBEL55E).